The primary structure comprises 271 residues: Ubiquitin thioesterase OTUB1 (271 aa).

Alanine 2 bears the N-acetylalanine mark. At serine 16 the chain carries Phosphoserine. Tyrosine 26 is modified (phosphotyrosine; by SRC). Residues serine 80–lysine 271 enclose the OTU domain. Aspartate 88 is a catalytic residue. Residue cysteine 91 is the Nucleophile of the active site. 2 ubiquitin-conjugating enzyme E2 binding regions span residues phenylalanine 130–phenylalanine 138 and aspartate 169–leucine 177. Residues phenylalanine 189 to glutamate 195 form a free ubiquitin binding region. The interval glutamine 206–lysine 213 is ubiquitin-conjugating enzyme E2 binding. Free ubiquitin binding stretches follow at residues glutamate 214–isoleucine 221 and asparagine 245–glutamate 251. Histidine 265 is a catalytic residue.

The protein belongs to the peptidase C65 family. In terms of assembly, interacts with FUS and RACK1. Interacts with UBE2D1/UBCH5A, UBE2W/UBC16 and UBE2N/UBC13. Interacts with RNF128. Forms a ternary complex with RNF128 and USP8. Interacts with the C-terminal UCH catalytic domain of USP8. As to quaternary structure, interacts with RNF128. Does not associate with USP8. In terms of processing, phosphorylation at Tyr-26 by SRC and SRMS promotes deubiquitination of RPTOR via a non-catalytic process. In terms of tissue distribution, isoform 1 is ubiquitous. Isoform 2 is expressed only in lymphoid tissues such as tonsils, lymph nodes and spleen, as well as peripheral blood mononuclear cells.

It is found in the cytoplasm. The catalysed reaction is Thiol-dependent hydrolysis of ester, thioester, amide, peptide and isopeptide bonds formed by the C-terminal Gly of ubiquitin (a 76-residue protein attached to proteins as an intracellular targeting signal).. With respect to regulation, by free ubiquitin: binding of free ubiquitin triggers conformational changes in the OTU domain and formation of a ubiquitin-binding helix in the N-terminus, promoting binding of the conjugated donor ubiquitin in UBE2N/UBC13 to OTUB1. Hydrolase that can specifically remove 'Lys-48'-linked conjugated ubiquitin from proteins and plays an important regulatory role at the level of protein turnover by preventing degradation. Regulator of T-cell anergy, a phenomenon that occurs when T-cells are rendered unresponsive to antigen rechallenge and no longer respond to their cognate antigen. Acts via its interaction with RNF128/GRAIL, a crucial inductor of CD4 T-cell anergy. Isoform 1 destabilizes RNF128, leading to prevent anergy. In contrast, isoform 2 stabilizes RNF128 and promotes anergy. Surprisingly, it regulates RNF128-mediated ubiquitination, but does not deubiquitinate polyubiquitinated RNF128. Deubiquitinates estrogen receptor alpha (ESR1). Mediates deubiquitination of 'Lys-48'-linked polyubiquitin chains, but not 'Lys-63'-linked polyubiquitin chains. Not able to cleave di-ubiquitin. Also capable of removing NEDD8 from NEDD8 conjugates, but with a much lower preference compared to 'Lys-48'-linked ubiquitin. Functionally, plays a key non-catalytic role in DNA repair regulation by inhibiting activity of RNF168, an E3 ubiquitin-protein ligase that promotes accumulation of 'Lys-63'-linked histone H2A and H2AX at DNA damage sites. Inhibits RNF168 independently of ubiquitin thioesterase activity by binding and inhibiting UBE2N/UBC13, the E2 partner of RNF168, thereby limiting spreading of 'Lys-63'-linked histone H2A and H2AX marks. Inhibition occurs by binding to free ubiquitin: free ubiquitin acts as an allosteric regulator that increases affinity for UBE2N/UBC13 and disrupts interaction with UBE2V1. The OTUB1-UBE2N/UBC13-free ubiquitin complex adopts a configuration that mimics a cleaved 'Lys48'-linked di-ubiquitin chain. Acts as a regulator of mTORC1 and mTORC2 complexes. When phosphorylated at Tyr-26, acts as an activator of the mTORC1 complex by mediating deubiquitination of RPTOR via a non-catalytic process: acts by binding and inhibiting the activity of the ubiquitin-conjugating enzyme E2 (UBE2D1/UBCH5A, UBE2W/UBC16 and UBE2N/UBC13), thereby preventing ubiquitination of RPTOR. Can also act as an inhibitor of the mTORC1 and mTORC2 complexes in response to amino acids by mediating non-catalytic deubiquitination of DEPTOR. This is Ubiquitin thioesterase OTUB1 (OTUB1) from Homo sapiens (Human).